We begin with the raw amino-acid sequence, 384 residues long: Putative glycosyltransferase EpsF (384 aa).

This sequence belongs to the glycosyltransferase group 1 family. Glycosyltransferase 4 subfamily.

May be involved in the production of the exopolysaccharide (EPS) component of the extracellular matrix during biofilm formation. EPS is responsible for the adhesion of chains of cells into bundles. Required for biofilm maintenance. The protein is Putative glycosyltransferase EpsF (epsF) of Bacillus subtilis (strain 168).